A 535-amino-acid polypeptide reads, in one-letter code: uncharacterized protein (535 aa).

A run of 2 helical transmembrane segments spans residues D7–A27 and G509–A529.

The protein resides in the cell membrane. This is an uncharacterized protein from Mycobacterium bovis (strain ATCC BAA-935 / AF2122/97).